The sequence spans 533 residues: GMP synthase [glutamine-hydrolyzing] (533 aa).

The Glutamine amidotransferase type-1 domain maps to 22 to 215; it reads RILILDFGSQ…THNVAGCSGT (194 aa). The active-site Nucleophile is Cys-99. Active-site residues include His-189 and Glu-191. A GMPS ATP-PPase domain is found at 216–408; that stretch reads WTMAGFRELE…LGIPESIVGR (193 aa). 243-249 is an ATP binding site; the sequence is SGGVDSS.

Homodimer.

It catalyses the reaction XMP + L-glutamine + ATP + H2O = GMP + L-glutamate + AMP + diphosphate + 2 H(+). It participates in purine metabolism; GMP biosynthesis; GMP from XMP (L-Gln route): step 1/1. Functionally, catalyzes the synthesis of GMP from XMP. The protein is GMP synthase [glutamine-hydrolyzing] of Gluconobacter oxydans (strain 621H) (Gluconobacter suboxydans).